A 431-amino-acid chain; its full sequence is Adenylosuccinate synthetase (431 aa).

GTP contacts are provided by residues 13 to 19 (GDEGKGK) and 41 to 43 (GHT). The active-site Proton acceptor is Asp14. Mg(2+) is bound by residues Asp14 and Gly41. IMP-binding positions include 14 to 17 (DEGK), 39 to 42 (NAGH), Thr130, Arg144, Gln225, Thr240, and Arg304. Catalysis depends on His42, which acts as the Proton donor. 300–306 (ATTGRER) contributes to the substrate binding site. Residues Arg306, 332–334 (KLD), and 415–417 (STG) each bind GTP.

This sequence belongs to the adenylosuccinate synthetase family. Homodimer. It depends on Mg(2+) as a cofactor.

Its subcellular location is the cytoplasm. The catalysed reaction is IMP + L-aspartate + GTP = N(6)-(1,2-dicarboxyethyl)-AMP + GDP + phosphate + 2 H(+). Its pathway is purine metabolism; AMP biosynthesis via de novo pathway; AMP from IMP: step 1/2. Functionally, plays an important role in the de novo pathway of purine nucleotide biosynthesis. Catalyzes the first committed step in the biosynthesis of AMP from IMP. The chain is Adenylosuccinate synthetase from Colwellia psychrerythraea (strain 34H / ATCC BAA-681) (Vibrio psychroerythus).